A 226-amino-acid polypeptide reads, in one-letter code: Phosphoribosylformylglycinamidine synthase subunit PurQ (226 aa).

The Glutamine amidotransferase type-1 domain occupies 2–226 (KFAVIQFPGS…LKNFLVTVKN (225 aa)). Residue Cys86 is the Nucleophile of the active site. Catalysis depends on residues His195 and Glu197.

As to quaternary structure, part of the FGAM synthase complex composed of 1 PurL, 1 PurQ and 2 PurS subunits.

The protein resides in the cytoplasm. It carries out the reaction N(2)-formyl-N(1)-(5-phospho-beta-D-ribosyl)glycinamide + L-glutamine + ATP + H2O = 2-formamido-N(1)-(5-O-phospho-beta-D-ribosyl)acetamidine + L-glutamate + ADP + phosphate + H(+). The enzyme catalyses L-glutamine + H2O = L-glutamate + NH4(+). Its pathway is purine metabolism; IMP biosynthesis via de novo pathway; 5-amino-1-(5-phospho-D-ribosyl)imidazole from N(2)-formyl-N(1)-(5-phospho-D-ribosyl)glycinamide: step 1/2. Its function is as follows. Part of the phosphoribosylformylglycinamidine synthase complex involved in the purines biosynthetic pathway. Catalyzes the ATP-dependent conversion of formylglycinamide ribonucleotide (FGAR) and glutamine to yield formylglycinamidine ribonucleotide (FGAM) and glutamate. The FGAM synthase complex is composed of three subunits. PurQ produces an ammonia molecule by converting glutamine to glutamate. PurL transfers the ammonia molecule to FGAR to form FGAM in an ATP-dependent manner. PurS interacts with PurQ and PurL and is thought to assist in the transfer of the ammonia molecule from PurQ to PurL. This is Phosphoribosylformylglycinamidine synthase subunit PurQ from Lactococcus lactis subsp. cremoris (Streptococcus cremoris).